The primary structure comprises 211 residues: MSVRTKICGLSTEETVATAVRYGADYIGFVFFEKSPRSVTPEKAAMLIRQIPDHVQKMGVFVDPDNNLLERALASGLTGFQLHGHETAERIASIRETFPKVKIWKALSIANSQDLAQAPHYRGLADRLLYDARTDGVLPGGMGRRFDWRLLKEYKHPLPWALSGGLDANNIAQAVAITGAELVDISSGVETSPGIKDMDKIAQFLQAVRLL.

It belongs to the TrpF family.

It carries out the reaction N-(5-phospho-beta-D-ribosyl)anthranilate = 1-(2-carboxyphenylamino)-1-deoxy-D-ribulose 5-phosphate. It functions in the pathway amino-acid biosynthesis; L-tryptophan biosynthesis; L-tryptophan from chorismate: step 3/5. This is N-(5'-phosphoribosyl)anthranilate isomerase from Zymomonas mobilis subsp. mobilis (strain ATCC 31821 / ZM4 / CP4).